A 263-amino-acid polypeptide reads, in one-letter code: MAKVISFFISLFLISFPLYANDYFRADSRTPDEVRRSGGLIPRGQDEAYERGTPININLYDHARGTATGNTRYNDGYVSTTTTLRQAHFLGQNMLGGYNEYYIYVVAAAPNLFDVNGVLGRYSPYPSENEYAALGGIPLSQIIGWYRVSFGAIEGGMHRNRDYRRDLFRGLSAAPNEDGYRIAGFPDGFPAWEEVPWREFAPNSCLPNNKASSDTTCASLTNKLSQHDLADFKKYIKRKFTLMTLLSINNDGFFSNNGGKDEL.

A signal peptide spans 1-20 (MAKVISFFISLFLISFPLYA). 26–39 (ADSRTPDEVRRSGG) serves as a coordination point for NAD(+). Residue Glu130 is part of the active site. A disulfide bridge links Cys205 with Cys217.

This sequence belongs to the enterotoxin A family. In terms of assembly, heterohexamer of one A chain and of five B chains.

The biological activity of the toxin is produced by the A chain, which activates intracellular adenyl cyclase. This is Heat-labile enterotoxin IIB, A chain from Escherichia coli.